Here is a 1526-residue protein sequence, read N- to C-terminus: Myosin type-2 heavy chain 1 (1526 aa).

A Myosin N-terminal SH3-like domain is found at 22 to 73; that stretch reads DDKRWVWISDPETAFTKAWIKEDLPDKKYVVRYNNSRDEKIVGEDEIDPVNP. Residues 77-755 enclose the Myosin motor domain; it reads DRVNDMAELT…VLAELEERRV (679 aa). 170-177 is an ATP binding site; it reads GESGAGKT. Actin-binding regions lie at residues 634–656 and 734–748; these read LNQL…VPNE and RIGV…GVLA. Residues 758 to 787 enclose the IQ domain; sequence LQRLMTMLQTRIRGFLQRKIFQKRLKDIQA. A coiled-coil region spans residues 875–1244; sequence ALDKEEILRR…SLTKQVNELS (370 aa). Serine 1044 carries the post-translational modification Phosphoserine.

It belongs to the TRAFAC class myosin-kinesin ATPase superfamily. Myosin family. As to quaternary structure, binds to cdc4 and rlc1.

In terms of biological role, required for cell division. It is a component of the cdc12 'spot', a structure thought to mark the site of septation. May work in conjunction with myo3. This Schizosaccharomyces pombe (strain 972 / ATCC 24843) (Fission yeast) protein is Myosin type-2 heavy chain 1 (myo2).